Consider the following 96-residue polypeptide: MNIRPLHDRVIVKRSEVESKSAGGIVLTGSAAEQSSRGEVLAVGNGRILENGNVMPLDVKVGDIVIFNEGYGVKKEKIDGEEVLILSESDLMAVVG.

It belongs to the GroES chaperonin family. As to quaternary structure, heptamer of 7 subunits arranged in a ring. Interacts with the chaperonin GroEL.

It localises to the cytoplasm. In terms of biological role, together with the chaperonin GroEL, plays an essential role in assisting protein folding. The GroEL-GroES system forms a nano-cage that allows encapsulation of the non-native substrate proteins and provides a physical environment optimized to promote and accelerate protein folding. GroES binds to the apical surface of the GroEL ring, thereby capping the opening of the GroEL channel. The polypeptide is Co-chaperonin GroES (Shewanella halifaxensis (strain HAW-EB4)).